An 81-amino-acid polypeptide reads, in one-letter code: Cytotoxin 5 (81 aa).

The signal sequence occupies residues M1–T21. Cystine bridges form between C24-C42, C35-C59, C63-C74, and C75-C80.

The protein belongs to the three-finger toxin family. Short-chain subfamily. Type IA cytotoxin sub-subfamily. In terms of assembly, monomer in solution; Homodimer and oligomer in the presence of negatively charged lipids forming a pore with a size ranging between 20 and 30 Angstroms. In terms of tissue distribution, expressed by the venom gland.

It localises to the secreted. The protein resides in the target cell membrane. In terms of biological role, shows cytolytic activity on many different cells by forming pore in lipid membranes. In vivo, increases heart rate or kills the animal by cardiac arrest. In addition, it binds to heparin with high affinity, interacts with Kv channel-interacting protein 1 (KCNIP1) in a calcium-independent manner, and binds to integrin alpha-V/beta-3 (ITGAV/ITGB3) with moderate affinity. The chain is Cytotoxin 5 from Naja atra (Chinese cobra).